The following is a 111-amino-acid chain: Ig kappa chain V-III region PC 7769 (111 aa).

Residues 1-23 (DIVLTQSPASLAVSLGQRATISC) form a framework-1 region. C23 and C92 are disulfide-bonded. The complementarity-determining-1 stretch occupies residues 24-38 (KASQSVDYDGDSYMN). The interval 39 to 53 (WYQQKPGQPPKVLIF) is framework-2. The tract at residues 54-60 (AASNLES) is complementarity-determining-2. The interval 61–92 (GIPARFSGSGSGTDFTLNIHPVEEEDAATYYC) is framework-3. A complementarity-determining-3 region spans residues 93 to 101 (QQSNEDPWT). The tract at residues 102–111 (FGSGTKLEIK) is framework-4.

This Mus musculus (Mouse) protein is Ig kappa chain V-III region PC 7769.